The sequence spans 209 residues: Uracil phosphoribosyltransferase (209 aa).

5-phospho-alpha-D-ribose 1-diphosphate contacts are provided by residues R79, R104, and 131-139; that span reads DPMLATGGS. Uracil is bound by residues I194 and 199-201; that span reads GDA. D200 serves as a coordination point for 5-phospho-alpha-D-ribose 1-diphosphate.

This sequence belongs to the UPRTase family. Requires Mg(2+) as cofactor.

The enzyme catalyses UMP + diphosphate = 5-phospho-alpha-D-ribose 1-diphosphate + uracil. Its pathway is pyrimidine metabolism; UMP biosynthesis via salvage pathway; UMP from uracil: step 1/1. Allosterically activated by GTP. Functionally, catalyzes the conversion of uracil and 5-phospho-alpha-D-ribose 1-diphosphate (PRPP) to UMP and diphosphate. This Lactiplantibacillus plantarum (strain ATCC BAA-793 / NCIMB 8826 / WCFS1) (Lactobacillus plantarum) protein is Uracil phosphoribosyltransferase.